Consider the following 56-residue polypeptide: Large ribosomal subunit protein bL32 (56 aa).

Basic residues predominate over residues 1 to 20 (MAVPKRRTSRSNTRSRRAQW). The interval 1 to 26 (MAVPKRRTSRSNTRSRRAQWKAKAPA) is disordered.

Belongs to the bacterial ribosomal protein bL32 family.

The protein is Large ribosomal subunit protein bL32 of Parafrankia sp. (strain EAN1pec).